Here is a 110-residue protein sequence, read N- to C-terminus: Large ribosomal subunit protein uL22 (110 aa).

This sequence belongs to the universal ribosomal protein uL22 family. As to quaternary structure, part of the 50S ribosomal subunit.

This protein binds specifically to 23S rRNA; its binding is stimulated by other ribosomal proteins, e.g. L4, L17, and L20. It is important during the early stages of 50S assembly. It makes multiple contacts with different domains of the 23S rRNA in the assembled 50S subunit and ribosome. In terms of biological role, the globular domain of the protein is located near the polypeptide exit tunnel on the outside of the subunit, while an extended beta-hairpin is found that lines the wall of the exit tunnel in the center of the 70S ribosome. In Paracidovorax citrulli (strain AAC00-1) (Acidovorax citrulli), this protein is Large ribosomal subunit protein uL22.